The sequence spans 631 residues: Phosphomethylpyrimidine synthase (631 aa).

Residues N239, M268, Y297, H333, 353 to 355, 394 to 397, and E433 each bind substrate; these read SRG and DGLR. A Zn(2+)-binding site is contributed by H437. Residue Y460 participates in substrate binding. H501 contributes to the Zn(2+) binding site. [4Fe-4S] cluster contacts are provided by C581, C584, and C589.

It belongs to the ThiC family. Homodimer. [4Fe-4S] cluster is required as a cofactor.

The enzyme catalyses 5-amino-1-(5-phospho-beta-D-ribosyl)imidazole + S-adenosyl-L-methionine = 4-amino-2-methyl-5-(phosphooxymethyl)pyrimidine + CO + 5'-deoxyadenosine + formate + L-methionine + 3 H(+). The protein operates within cofactor biosynthesis; thiamine diphosphate biosynthesis. Functionally, catalyzes the synthesis of the hydroxymethylpyrimidine phosphate (HMP-P) moiety of thiamine from aminoimidazole ribotide (AIR) in a radical S-adenosyl-L-methionine (SAM)-dependent reaction. In Salmonella arizonae (strain ATCC BAA-731 / CDC346-86 / RSK2980), this protein is Phosphomethylpyrimidine synthase.